We begin with the raw amino-acid sequence, 187 residues long: Proenkephalin-A (187 aa).

4 propeptides span residues methionine 52 to alanine 70, aspartate 80 to glutamine 143, valine 153 to glutamine 163, and phenylalanine 173 to serine 187. The disordered stretch occupies residues alanine 81–serine 132. Over residues leucine 88 to leucine 99 the composition is skewed to low complexity. Residues arginine 111–lysine 120 are compositionally biased toward basic and acidic residues. Serine 187 is modified (phosphoserine).

Belongs to the opioid neuropeptide precursor family. In terms of processing, processed and degraded by ACE. The N-terminal domain contains 6 conserved cysteines thought to be involved in disulfide bonding and/or processing. Post-translationally, proenkephalin-A is cleaved by CTSL to generate Met-enkephalin.

It localises to the cytoplasmic vesicle. The protein localises to the secretory vesicle. It is found in the chromaffin granule lumen. The protein resides in the secreted. Neuropeptide that competes with and mimic the effects of opiate drugs. They play a role in a number of physiologic functions, including pain perception and responses to stress. This is Proenkephalin-A (PENK) from Felis catus (Cat).